We begin with the raw amino-acid sequence, 29 residues long: Vodo peptide N (29 aa).

Positions 1–29 (GLPVCGETCTLGKCYTAGCSCSWPVCYRN) form a cross-link, cyclopeptide (Gly-Asn). 3 disulfides stabilise this stretch: C5-C19, C9-C21, and C14-C26.

This is a cyclic peptide.

In terms of biological role, probably participates in a plant defense mechanism. This Viola odorata (Sweet violet) protein is Vodo peptide N.